The primary structure comprises 207 residues: MANVKLFDQTGKEVSSVELNDAIFGIEPNESVVFDVVISQRASLRQGTHAVKNRSAVSGGGRKPWRQKGTGRARQGSIRSPQWRGGGVVFGPTPRSYGYKLPQKVRRLALKSVYSAKVAEDKFVAVEGLSFAAPKTAEFAKVLSALSIDTKVLVLVEEGNEFAALSARNLPNVTVATAATASVLDIVNADKLLVTKEAISTIEEVLA.

Positions histidine 49–isoleucine 78 are disordered.

This sequence belongs to the universal ribosomal protein uL4 family. Part of the 50S ribosomal subunit.

Functionally, one of the primary rRNA binding proteins, this protein initially binds near the 5'-end of the 23S rRNA. It is important during the early stages of 50S assembly. It makes multiple contacts with different domains of the 23S rRNA in the assembled 50S subunit and ribosome. Its function is as follows. Forms part of the polypeptide exit tunnel. The sequence is that of Large ribosomal subunit protein uL4 (rplD) from Streptococcus pyogenes serotype M1.